The chain runs to 709 residues: Ral guanine nucleotide dissociation stimulator-like 3 (709 aa).

Positions 26–55 are disordered; that stretch reads VYSVSLRRQRSQRSTPERSGEGQTPIPATD. Residues 64–201 form the N-terminal Ras-GEF domain; that stretch reads KVRALRAARL…LLEDFLKEAK (138 aa). Disordered regions lie at residues 203 to 225, 395 to 416, and 502 to 604; these read EQTE…TPGS, SQEE…KLPP, and PPAA…SRVP. The region spanning 248–503 is the Ras-GEF domain; that stretch reads SVDDVAEQLT…YRVSRVIEPP (256 aa). Composition is skewed to low complexity over residues 502-511 and 533-551; these read PPAASCPSSP and SSPG…SVSP. 2 positions are modified to phosphoserine: Ser-506 and Ser-510. Residues 552–576 show a composition bias toward pro residues; sequence GSPPSSPRNREPPPPGSPPASPGPQ. Ser-553, Ser-568, Ser-572, Ser-577, and Ser-600 each carry phosphoserine. The interval 611–706 is interaction with HRAS, MRAS and RIT1; that stretch reads SEARVIRVSI…KEGTGHTLSA (96 aa). Positions 612-699 constitute a Ras-associating domain; sequence EARVIRVSIN…GDFLLRRKEG (88 aa).

In terms of assembly, interacts with GTP-bound forms of RIT1, HRAS and MRAS. In terms of tissue distribution, widely expressed. Expressed at high levels in the liver and kidney.

Functionally, guanine nucleotide exchange factor (GEF) for Ral-A. Potential effector of GTPase HRas and Ras-related protein M-Ras. Negatively regulates Elk-1-dependent gene induction downstream of HRas and MEKK1. The protein is Ral guanine nucleotide dissociation stimulator-like 3 (Rgl3) of Mus musculus (Mouse).